The following is a 156-amino-acid chain: ATP synthase subunit b (156 aa).

Residues 13-33 (AFIIFVWFCMKFVWPPLMNAI) traverse the membrane as a helical segment.

It belongs to the ATPase B chain family. As to quaternary structure, F-type ATPases have 2 components, F(1) - the catalytic core - and F(0) - the membrane proton channel. F(1) has five subunits: alpha(3), beta(3), gamma(1), delta(1), epsilon(1). F(0) has three main subunits: a(1), b(2) and c(10-14). The alpha and beta chains form an alternating ring which encloses part of the gamma chain. F(1) is attached to F(0) by a central stalk formed by the gamma and epsilon chains, while a peripheral stalk is formed by the delta and b chains.

It is found in the cell inner membrane. F(1)F(0) ATP synthase produces ATP from ADP in the presence of a proton or sodium gradient. F-type ATPases consist of two structural domains, F(1) containing the extramembraneous catalytic core and F(0) containing the membrane proton channel, linked together by a central stalk and a peripheral stalk. During catalysis, ATP synthesis in the catalytic domain of F(1) is coupled via a rotary mechanism of the central stalk subunits to proton translocation. Its function is as follows. Component of the F(0) channel, it forms part of the peripheral stalk, linking F(1) to F(0). In Shewanella woodyi (strain ATCC 51908 / MS32), this protein is ATP synthase subunit b.